We begin with the raw amino-acid sequence, 45 residues long: DNA-directed RNA polymerase subunit Rpo12 (45 aa).

Zn(2+) is bound by residues Cys8, Cys23, and Cys26.

This sequence belongs to the archaeal Rpo12/eukaryotic RPC10 RNA polymerase subunit family. In terms of assembly, part of the RNA polymerase complex. The cofactor is Zn(2+).

It is found in the cytoplasm. The catalysed reaction is RNA(n) + a ribonucleoside 5'-triphosphate = RNA(n+1) + diphosphate. Functionally, DNA-dependent RNA polymerase (RNAP) catalyzes the transcription of DNA into RNA using the four ribonucleoside triphosphates as substrates. The chain is DNA-directed RNA polymerase subunit Rpo12 from Methanocella arvoryzae (strain DSM 22066 / NBRC 105507 / MRE50).